Reading from the N-terminus, the 330-residue chain is Lipoyl synthase (330 aa).

[4Fe-4S] cluster contacts are provided by cysteine 77, cysteine 82, cysteine 88, cysteine 103, cysteine 107, cysteine 110, and serine 317. The region spanning 89-306 is the Radical SAM core domain; it reads FNHGTATFMI…RSEAEKMGFE (218 aa).

This sequence belongs to the radical SAM superfamily. Lipoyl synthase family. The cofactor is [4Fe-4S] cluster.

The protein resides in the cytoplasm. It catalyses the reaction [[Fe-S] cluster scaffold protein carrying a second [4Fe-4S](2+) cluster] + N(6)-octanoyl-L-lysyl-[protein] + 2 oxidized [2Fe-2S]-[ferredoxin] + 2 S-adenosyl-L-methionine + 4 H(+) = [[Fe-S] cluster scaffold protein] + N(6)-[(R)-dihydrolipoyl]-L-lysyl-[protein] + 4 Fe(3+) + 2 hydrogen sulfide + 2 5'-deoxyadenosine + 2 L-methionine + 2 reduced [2Fe-2S]-[ferredoxin]. It functions in the pathway protein modification; protein lipoylation via endogenous pathway; protein N(6)-(lipoyl)lysine from octanoyl-[acyl-carrier-protein]: step 2/2. Its function is as follows. Catalyzes the radical-mediated insertion of two sulfur atoms into the C-6 and C-8 positions of the octanoyl moiety bound to the lipoyl domains of lipoate-dependent enzymes, thereby converting the octanoylated domains into lipoylated derivatives. The sequence is that of Lipoyl synthase from Haemophilus ducreyi (strain 35000HP / ATCC 700724).